Reading from the N-terminus, the 266-residue chain is Putative tyrosine phosphatase 197R (266 aa).

Positions 15–167 (RPTLGSLSDK…LFGSQNINND (153 aa)) constitute a Tyrosine-protein phosphatase domain. Cysteine 111 serves as the catalytic Phosphocysteine intermediate.

The protein belongs to the protein-tyrosine phosphatase family.

It carries out the reaction O-phospho-L-tyrosyl-[protein] + H2O = L-tyrosyl-[protein] + phosphate. In Invertebrate iridescent virus 6 (IIV-6), this protein is Putative tyrosine phosphatase 197R.